Consider the following 425-residue polypeptide: Receptor-like protein 55 (425 aa).

The signal sequence occupies residues 1 to 25; it reads MKPQQPQPPLLLLLLLPLLLTTVSS. Residues 26-397 are Extracellular-facing; the sequence is YPLNPKQLKA…EEEHKGSNKT (372 aa). Asn40, Asn54, Asn79, and Asn132 each carry an N-linked (GlcNAc...) asparagine glycan. LRR repeat units follow at residues 144–169, 170–193, 195–216, 217–240, 242–264, 265–287, and 288–313; these read LKNLKTLYISSTPIQTSRRLYVILGN, MHKLTSLTISNSNLTGLIPKSFHS, LRYIDLSNNSLKGSIRISITRL, KNLKSLNLSHNSLSGQIPNKIKSL, FLKNLSLASNKLSGTIPNSLSSI, SELTHLDLSMNQLNGTVPSFFSE, and MKNLKHLNLADNSFHGVLPFNESFIK. N-linked (GlcNAc...) asparagine glycosylation is found at Asn182, Asn202, Asn223, Asn245, Asn278, Asn308, and Asn329. A disordered region spans residues 355-389; sequence PSQKEESLSGENDYDVEGGNEEKTENLKTKEEEEE. Positions 374-389 are enriched in basic and acidic residues; that stretch reads NEEKTENLKTKEEEEE. Residue Asn395 is glycosylated (N-linked (GlcNAc...) asparagine). A helical transmembrane segment spans residues 398 to 418; the sequence is LFGLGIGLFSLVFLILFLFYL. At 419 to 425 the chain is on the cytoplasmic side; it reads AKRCRLI.

This sequence belongs to the RLP family.

The protein localises to the cell membrane. Functionally, involved in plant defense. The protein is Receptor-like protein 55 of Arabidopsis thaliana (Mouse-ear cress).